Consider the following 69-residue polypeptide: UPF0150 protein ssr1258 (69 aa).

Belongs to the UPF0150 family.

The chain is UPF0150 protein ssr1258 from Synechocystis sp. (strain ATCC 27184 / PCC 6803 / Kazusa).